The primary structure comprises 607 residues: UvrABC system protein C (607 aa).

In terms of domain architecture, GIY-YIG spans 19-97 (TLSGVYQMRD…IKQYQPKFNI (79 aa)). One can recognise a UVR domain in the interval 205–240 (EHLLQTLTEHMLQASAAQQYERAAIVRDQISELRTI).

This sequence belongs to the UvrC family. Interacts with UvrB in an incision complex.

The protein localises to the cytoplasm. The UvrABC repair system catalyzes the recognition and processing of DNA lesions. UvrC both incises the 5' and 3' sides of the lesion. The N-terminal half is responsible for the 3' incision and the C-terminal half is responsible for the 5' incision. This chain is UvrABC system protein C, found in Dichelobacter nodosus (strain VCS1703A).